We begin with the raw amino-acid sequence, 396 residues long: Penicillopepsin-1 (396 aa).

An N-terminal signal peptide occupies residues 1–20; that stretch reads MVVFSKVTASLACFSAVVSA. The propeptide at 21–72 is activation peptide; sequence AAVPVKSPRQGFSVNQVQKTVTGTRTVNLPGVYANALAKYGATVPANVHAAA. In terms of domain architecture, Peptidase A1 spans 88–393; that stretch reads YLTPVKIGES…DAEGPRLGFA (306 aa). Residues Asp-104 and Asp-285 contribute to the active site. Asn-311 carries an N-linked (GlcNAc...) asparagine glycan. Residues Cys-321 and Cys-356 are joined by a disulfide bond.

The protein belongs to the peptidase A1 family. Monomer.

The protein resides in the secreted. The enzyme catalyses Hydrolysis of proteins with broad specificity similar to that of pepsin A, preferring hydrophobic residues at P1 and P1', but also cleaving 20-Gly-|-Glu-21 in the B chain of insulin. Clots milk, and activates trypsinogen.. In terms of biological role, secreted aspartic endopeptidase that allows assimilation of proteinaceous substrates. The scissile peptide bond is attacked by a nucleophilic water molecule activated by two aspartic residues in the active site. Shows a broad primary substrate specificity. Favors hydrophobic residues at the P1 and P1' positions, but can also activate trypsinogen and hydrolyze the B chain of insulin between positions 'Gly-20' and 'Glu-21'. This Penicillium rubens (strain ATCC 28089 / DSM 1075 / NRRL 1951 / Wisconsin 54-1255) (Penicillium chrysogenum) protein is Penicillopepsin-1 (pepA).